Here is a 164-residue protein sequence, read N- to C-terminus: UPF0262 protein Saro_0143 (164 aa).

This sequence belongs to the UPF0262 family.

The polypeptide is UPF0262 protein Saro_0143 (Novosphingobium aromaticivorans (strain ATCC 700278 / DSM 12444 / CCUG 56034 / CIP 105152 / NBRC 16084 / F199)).